The chain runs to 320 residues: Ferrochelatase (320 aa).

2 residues coordinate Fe cation: H194 and E275.

Belongs to the ferrochelatase family. In terms of assembly, monomer.

It localises to the cytoplasm. The catalysed reaction is heme b + 2 H(+) = protoporphyrin IX + Fe(2+). The protein operates within porphyrin-containing compound metabolism; protoheme biosynthesis; protoheme from protoporphyrin-IX: step 1/1. Its function is as follows. Catalyzes the ferrous insertion into protoporphyrin IX. The polypeptide is Ferrochelatase (Shigella sonnei (strain Ss046)).